A 63-amino-acid chain; its full sequence is Large ribosomal subunit protein uL29 (63 aa).

The protein belongs to the universal ribosomal protein uL29 family.

This is Large ribosomal subunit protein uL29 from Chromohalobacter salexigens (strain ATCC BAA-138 / DSM 3043 / CIP 106854 / NCIMB 13768 / 1H11).